A 163-amino-acid polypeptide reads, in one-letter code: uncharacterized protein (163 aa).

Positions 136-161 (QKYIENHQKEINEHVEKLRTLHKELR) form a coiled coil.

This is an uncharacterized protein from Acanthamoeba polyphaga (Amoeba).